A 539-amino-acid chain; its full sequence is GMP synthase [glutamine-hydrolyzing] (539 aa).

One can recognise a Glutamine amidotransferase type-1 domain in the interval lysine 4 to aspartate 202. Cysteine 81 (nucleophile) is an active-site residue. Catalysis depends on residues histidine 176 and glutamate 178. The GMPS ATP-PPase domain occupies tryptophan 203–arginine 395. Serine 230–serine 236 serves as a coordination point for ATP.

As to quaternary structure, homodimer.

The enzyme catalyses XMP + L-glutamine + ATP + H2O = GMP + L-glutamate + AMP + diphosphate + 2 H(+). Its pathway is purine metabolism; GMP biosynthesis; GMP from XMP (L-Gln route): step 1/1. In terms of biological role, catalyzes the synthesis of GMP from XMP. The polypeptide is GMP synthase [glutamine-hydrolyzing] (Cupriavidus necator (strain ATCC 17699 / DSM 428 / KCTC 22496 / NCIMB 10442 / H16 / Stanier 337) (Ralstonia eutropha)).